The chain runs to 91 residues: Probable Fe(2+)-trafficking protein (91 aa).

The protein belongs to the Fe(2+)-trafficking protein family.

Its function is as follows. Could be a mediator in iron transactions between iron acquisition and iron-requiring processes, such as synthesis and/or repair of Fe-S clusters in biosynthetic enzymes. In Histophilus somni (strain 129Pt) (Haemophilus somnus), this protein is Probable Fe(2+)-trafficking protein.